The primary structure comprises 785 residues: E3 UFM1-protein ligase 1 homolog (785 aa).

A disordered region spans residues 404 to 483 (GGNASNQLDD…GGGGSNKKSV (80 aa)).

This sequence belongs to the UFL1 family.

In terms of biological role, E3 UFM1-protein ligase that mediates ufmylation of target proteins. The polypeptide is E3 UFM1-protein ligase 1 homolog (Drosophila willistoni (Fruit fly)).